Consider the following 447-residue polypeptide: Glutamyl-tRNA reductase (447 aa).

Residues 49–52 (TCNR), serine 109, 114–116 (EQQ), and glutamine 120 each bind substrate. Cysteine 50 (nucleophile) is an active-site residue. Residue 189–194 (GAGSMG) coordinates NADP(+).

Belongs to the glutamyl-tRNA reductase family. As to quaternary structure, homodimer.

It carries out the reaction (S)-4-amino-5-oxopentanoate + tRNA(Glu) + NADP(+) = L-glutamyl-tRNA(Glu) + NADPH + H(+). It participates in porphyrin-containing compound metabolism; protoporphyrin-IX biosynthesis; 5-aminolevulinate from L-glutamyl-tRNA(Glu): step 1/2. Catalyzes the NADPH-dependent reduction of glutamyl-tRNA(Glu) to glutamate 1-semialdehyde (GSA). This is Glutamyl-tRNA reductase from Mycobacterium sp. (strain JLS).